We begin with the raw amino-acid sequence, 334 residues long: Fructose-1,6-bisphosphatase class 1 (334 aa).

Residues E89, D112, L114, and D115 each contribute to the Mg(2+) site. Substrate-binding positions include 115 to 118 (DGSS), N208, Y241, 259 to 261 (YLY), and K271. E277 provides a ligand contact to Mg(2+).

The protein belongs to the FBPase class 1 family. Homotetramer. Mg(2+) serves as cofactor.

The protein localises to the cytoplasm. It catalyses the reaction beta-D-fructose 1,6-bisphosphate + H2O = beta-D-fructose 6-phosphate + phosphate. It functions in the pathway carbohydrate biosynthesis; gluconeogenesis. This chain is Fructose-1,6-bisphosphatase class 1, found in Pectobacterium atrosepticum (strain SCRI 1043 / ATCC BAA-672) (Erwinia carotovora subsp. atroseptica).